Consider the following 154-residue polypeptide: Aspartate carbamoyltransferase regulatory chain (154 aa).

Residues C109, C114, C138, and C141 each contribute to the Zn(2+) site.

This sequence belongs to the PyrI family. Contains catalytic and regulatory chains. Zn(2+) is required as a cofactor.

In terms of biological role, involved in allosteric regulation of aspartate carbamoyltransferase. This is Aspartate carbamoyltransferase regulatory chain from Serratia proteamaculans (strain 568).